The following is a 288-amino-acid chain: Ribonuclease HIII (288 aa).

In terms of domain architecture, RNase H type-2 spans 76–288 (YSAIGSDEVG…KNITKQFIKN (213 aa)). Residues aspartate 82, glutamate 83, and aspartate 185 each contribute to the a divalent metal cation site.

It belongs to the RNase HII family. RnhC subfamily. It depends on Mn(2+) as a cofactor. The cofactor is Mg(2+).

The protein resides in the cytoplasm. The catalysed reaction is Endonucleolytic cleavage to 5'-phosphomonoester.. In terms of biological role, endonuclease that specifically degrades the RNA of RNA-DNA hybrids. This chain is Ribonuclease HIII, found in Phytoplasma mali (strain AT).